The sequence spans 679 residues: Probable metal-nicotianamine transporter YSL18 (679 aa).

A compositionally biased stretch (basic and acidic residues) spans 1-17; sequence MESVGDPRDGPSTERAF. The disordered stretch occupies residues 1–21; that stretch reads MESVGDPRDGPSTERAFEGQP. The next 14 membrane-spanning stretches (helical) occupy residues 29–49, 51–71, 101–121, 144–164, 211–231, 255–275, 309–329, 379–399, 407–427, 441–461, 497–517, 547–567, 593–613, and 627–647; these read VTLRAVVASVALGVALSSVMM, LVFTSGIIPSLNISAGLLGFF, CVVACASMTYSGGFGSYLLAM, FGRMMAFFFLVSFVGLLAIVP, LASLFWSIFQWFYTGGPNCGF, VGIGMISPHLINVSMLFGSII, VFCAIAMILGDGIFQLVAISL, FAISGYVVLATVSTVVIPLMY, VAAAYAFAPVLAFCNAYGTGV, ILMFASWIGIKNGGIVGSLVI, VIGTAMGCVVNPAVFTVFHHF, LPKYCLAISATFFVLALAVCA, FLLVPAVSIDMCIGSLIVFLW, and VLASGLICGDGLFSIPYALLA.

It belongs to the YSL (TC 2.A.67.2) family.

It is found in the membrane. May be involved in the transport of nicotianamine-chelated metals. The polypeptide is Probable metal-nicotianamine transporter YSL18 (YSL18) (Oryza sativa subsp. japonica (Rice)).